The primary structure comprises 191 residues: Flagellar transcriptional regulator FlhC (191 aa).

Zn(2+)-binding residues include Cys-139, Cys-142, Cys-159, and Cys-162.

Belongs to the FlhC family. As to quaternary structure, heterohexamer composed of two FlhC and four FlhD subunits. Each FlhC binds a FlhD dimer, forming a heterotrimer, and a hexamer assembles by dimerization of two heterotrimers. Zn(2+) serves as cofactor.

It is found in the cytoplasm. Functions in complex with FlhD as a master transcriptional regulator that regulates transcription of several flagellar and non-flagellar operons by binding to their promoter region. Activates expression of class 2 flagellar genes, including fliA, which is a flagellum-specific sigma factor that turns on the class 3 genes. Also regulates genes whose products function in a variety of physiological pathways. The protein is Flagellar transcriptional regulator FlhC of Enterobacter cloacae subsp. cloacae (strain ATCC 13047 / DSM 30054 / NBRC 13535 / NCTC 10005 / WDCM 00083 / NCDC 279-56).